The following is a 637-amino-acid chain: Type II restriction enzyme and methyltransferase RM.BcgI (637 aa).

This sequence in the C-terminal section; belongs to the N(4)/N(6)-methyltransferase family. In terms of assembly, heterotrimer of two A and one B subunit. Both subunits are necessary for DNA-binding, which is sequence non-specific. It depends on Mg(2+) as a cofactor.

The enzyme catalyses Endonucleolytic cleavage of DNA to give specific double-stranded fragments with terminal 5'-phosphates.. It catalyses the reaction a 2'-deoxyadenosine in DNA + S-adenosyl-L-methionine = an N(6)-methyl-2'-deoxyadenosine in DNA + S-adenosyl-L-homocysteine + H(+). With respect to regulation, DNA restriction requires S-adenosyl-L-methionine and Mg(2+), and is inhibited by S-adenosyl-homocysteine. SAM may be a cofactor for DNA restriction. In terms of biological role, a B, G, H and S subtype restriction enzyme that recognizes the double-stranded sequence 5'-CGAN(6)TGC-3' and cleaves bilaterally and symmetrically 10 base pairs upstream and 12 base pairs downstream of the sequence to release a 34-base pair fragment. Methylation of the recognition sequence occurs on the adenine in either one or both strands; seems to methylate restricted DNA. This subunit has no methylation or DNA restriction activity on its own. This chain is Type II restriction enzyme and methyltransferase RM.BcgI, found in Heyndrickxia coagulans (Weizmannia coagulans).